An 86-amino-acid polypeptide reads, in one-letter code: CLAVATA3/ESR (CLE)-related protein 7 (86 aa).

An N-terminal signal peptide occupies residues methionine 1–glycine 22. Asparagine 46 carries an N-linked (GlcNAc...) asparagine glycan. Residues valine 63–isoleucine 86 are disordered. Proline 68 and proline 71 each carry hydroxyproline. An O-linked (Ara...) hydroxyproline glycan is attached at proline 71.

Belongs to the CLV3/ESR signal peptide family. Post-translationally, the O-glycosylation (arabinosylation) of the hydroxyproline Pro-71 enhances binding affinity of the CLE7p peptide for its receptor. Expressed in roots and seedlings.

The protein resides in the secreted. It localises to the extracellular space. Functionally, extracellular signal peptide that regulates cell fate. This chain is CLAVATA3/ESR (CLE)-related protein 7, found in Arabidopsis thaliana (Mouse-ear cress).